A 300-amino-acid chain; its full sequence is Cation-efflux pump FieF (300 aa).

The chain crosses the membrane as a helical span at residues 24–44 (LLIKILAWWYTGSVSILAALV). Zn(2+) is bound by residues Asp-45 and Asp-49. 2 helical membrane-spanning segments follow: residues 82–102 (AALA…LTSI) and 114–134 (PGVG…LVTF). Zn(2+) contacts are provided by His-153 and Asp-157. Transmembrane regions (helical) follow at residues 156-176 (SDVM…YGWH) and 178-198 (ADAL…LRMG).

Belongs to the cation diffusion facilitator (CDF) transporter (TC 2.A.4) family. FieF subfamily. Homodimer.

The protein localises to the cell inner membrane. The catalysed reaction is Zn(2+)(in) + H(+)(out) = Zn(2+)(out) + H(+)(in). The enzyme catalyses Cd(2+)(in) + H(+)(out) = Cd(2+)(out) + H(+)(in). It catalyses the reaction Fe(2+)(in) + H(+)(out) = Fe(2+)(out) + H(+)(in). In terms of biological role, divalent metal cation transporter which exports Zn(2+), Cd(2+) and possibly Fe(2+). May be involved in zinc and iron detoxification by efflux. The sequence is that of Cation-efflux pump FieF from Salmonella agona (strain SL483).